The chain runs to 646 residues: Exoribonuclease 2 (646 aa).

In terms of domain architecture, RNB spans 191–518 (RIDLTALDFV…NHRLLKAIIQ (328 aa)). The 83-residue stretch at 563-645 (DKTFSAEIVD…ETRNIVARPV (83 aa)) folds into the S1 motif domain.

It belongs to the RNR ribonuclease family. RNase II subfamily.

The protein localises to the cytoplasm. The catalysed reaction is Exonucleolytic cleavage in the 3'- to 5'-direction to yield nucleoside 5'-phosphates.. In terms of biological role, involved in mRNA degradation. Hydrolyzes single-stranded polyribonucleotides processively in the 3' to 5' direction. This chain is Exoribonuclease 2, found in Xenorhabdus bovienii (strain SS-2004) (Xenorhabdus nematophila subsp. bovienii).